Here is a 161-residue protein sequence, read N- to C-terminus: MPSFDVVCEANMVELKNAVEQANKEISTRFDFKGSDARVEHKDQELTLFGDDDFKLGQVKDVLLTKLAKRGVDVRFLDYQDKQKIGGDKMKQVVKIKKGVSGELSKKIVKLIKDSKIKVQGSIQGDAVRVSGAKRDDLQAVIAMLRKDVTDTPLDFNNFRD.

The protein belongs to the YajQ family.

Its function is as follows. Nucleotide-binding protein. The protein is Nucleotide-binding protein RSc2549 of Ralstonia nicotianae (strain ATCC BAA-1114 / GMI1000) (Ralstonia solanacearum).